The following is a 460-amino-acid chain: Chromosomal replication initiator protein DnaA (460 aa).

The interval M1–D78 is domain I, interacts with DnaA modulators. Positions D78–S123 are domain II. The domain III, AAA+ region stretch occupies residues R124–S340. 4 residues coordinate ATP: G168, G170, K171, and T172. The interval R341–G460 is domain IV, binds dsDNA.

The protein belongs to the DnaA family. In terms of assembly, oligomerizes as a right-handed, spiral filament on DNA at oriC.

It localises to the cytoplasm. Its function is as follows. Plays an essential role in the initiation and regulation of chromosomal replication. ATP-DnaA binds to the origin of replication (oriC) to initiate formation of the DNA replication initiation complex once per cell cycle. Binds the DnaA box (a 9 base pair repeat at the origin) and separates the double-stranded (ds)DNA. Forms a right-handed helical filament on oriC DNA; dsDNA binds to the exterior of the filament while single-stranded (ss)DNA is stabiized in the filament's interior. The ATP-DnaA-oriC complex binds and stabilizes one strand of the AT-rich DNA unwinding element (DUE), permitting loading of DNA polymerase. After initiation quickly degrades to an ADP-DnaA complex that is not apt for DNA replication. Binds acidic phospholipids. This Herminiimonas arsenicoxydans protein is Chromosomal replication initiator protein DnaA.